Reading from the N-terminus, the 185-residue chain is Ribosome-recycling factor (185 aa).

The protein belongs to the RRF family.

The protein localises to the cytoplasm. Its function is as follows. Responsible for the release of ribosomes from messenger RNA at the termination of protein biosynthesis. May increase the efficiency of translation by recycling ribosomes from one round of translation to another. The sequence is that of Ribosome-recycling factor from Sulfurovum sp. (strain NBC37-1).